We begin with the raw amino-acid sequence, 223 residues long: Uracil phosphoribosyltransferase (223 aa).

Residues Arg-86, Arg-111, and 145–153 (DPILATGST) contribute to the 5-phospho-alpha-D-ribose 1-diphosphate site. Residues Ile-209 and 214-216 (GDA) contribute to the uracil site. A 5-phospho-alpha-D-ribose 1-diphosphate-binding site is contributed by Asp-215.

It belongs to the UPRTase family. Mg(2+) is required as a cofactor.

It carries out the reaction UMP + diphosphate = 5-phospho-alpha-D-ribose 1-diphosphate + uracil. It functions in the pathway pyrimidine metabolism; UMP biosynthesis via salvage pathway; UMP from uracil: step 1/1. With respect to regulation, allosterically activated by GTP. In terms of biological role, catalyzes the conversion of uracil and 5-phospho-alpha-D-ribose 1-diphosphate (PRPP) to UMP and diphosphate. This is Uracil phosphoribosyltransferase from Natronomonas pharaonis (strain ATCC 35678 / DSM 2160 / CIP 103997 / JCM 8858 / NBRC 14720 / NCIMB 2260 / Gabara) (Halobacterium pharaonis).